The following is a 266-amino-acid chain: MMASRVMASSSPSHTASDLARFAAGRGGGGSAGLGSMNVEEILRGIYADMPTPALPLVGGDRPMSPLPAPDVAAAPRTAEEVWKEITGAGVAAAAGGVVPPAAAAAAAPAVVAGAGAGTGAEMTLEDFLAREGAVKEDEAVVTDPSAAKGQVVMGFLNGAEVTGGVTGGRSRKRHLMDPMDRAAMQRQKRMIKNRESAARSRERKQAYIAELESLVTQLEEENAKMFKEQEEQHQKRLKELKEMVVPVIIRKTSARDLRRTNSMEW.

The 65-residue stretch at 184–248 (AMQRQKRMIK…KELKEMVVPV (65 aa)) folds into the bZIP domain. The tract at residues 187–205 (RQKRMIKNRESAARSRERK) is basic motif. Positions 202–244 (RERKQAYIAELESLVTQLEEENAKMFKEQEEQHQKRLKELKEM) form a coiled coil. The leucine-zipper stretch occupies residues 212-219 (LESLVTQL).

It is found in the nucleus. Transcription activator that binds to the ABA-responsive elements (ABREs) in vitro. Involved in abiotic stress responses and abscisic acid (ABA) signaling. Involved in the signaling pathway that induces growth inhibition in response to D-allose. This is bZIP transcription factor 12 from Oryza sativa subsp. japonica (Rice).